An 84-amino-acid polypeptide reads, in one-letter code: UPF0410 protein YmgE (84 aa).

3 consecutive transmembrane segments (helical) span residues M1–M21, G27–A47, and G58–F78.

It belongs to the UPF0410 family.

It localises to the cell inner membrane. The protein is UPF0410 protein YmgE (ymgE) of Escherichia coli (strain K12).